Reading from the N-terminus, the 186-residue chain is MILVDWQIMDRISRGQIKVEPFEPGLIQPNSLDIRLGDHFVWYVPGDRVIDPYDKESVTAEVEEMNANEVILYPGQFMLAETKEVLSLPDNVVASIEGKSSIARLGIELHQTGGWIDAGFIGSITLEMCNVNQRPVKMYAGMPIGQLVFYTTERAEQPYNLKQDAKYQGQRQATLSRYHENQRFIQ.

DCTP is bound by residues 99-104, D117, 125-127, Q146, Y159, K166, and Q170; these read KSSIAR and TLE. The active-site Proton donor/acceptor is the E127.

It belongs to the dCTP deaminase family. Homotrimer.

It catalyses the reaction dCTP + 2 H2O = dUMP + NH4(+) + diphosphate. Its pathway is pyrimidine metabolism; dUMP biosynthesis; dUMP from dCTP: step 1/1. Bifunctional enzyme that catalyzes both the deamination of dCTP to dUTP and the hydrolysis of dUTP to dUMP without releasing the toxic dUTP intermediate. In Methanosphaerula palustris (strain ATCC BAA-1556 / DSM 19958 / E1-9c), this protein is dCTP deaminase, dUMP-forming.